We begin with the raw amino-acid sequence, 1213 residues long: Filamin-A-interacting protein 1 (1213 aa).

A disordered region spans residues 1-70; it reads MRSRNQGGES…TSGECERKTK (70 aa). A compositionally biased stretch (basic and acidic residues) spans 61 to 70; the sequence is TSGECERKTK. S138 carries the phosphoserine modification. Coiled coils occupy residues 192-591 and 624-781; these read DYMN…ELSC and PEDN…LSKR. 2 disordered regions span residues 878 to 900 and 949 to 976; these read NGPS…PGEV and KPRI…GPER. Polar residues-rich tracts occupy residues 880–894 and 960–970; these read PSIT…NSSP and VMPQKQKSGDT. Residue S979 is modified to Phosphoserine. Positions 1103-1213 are disordered; the sequence is VSTGTVLRSP…STTSLGGGKG (111 aa). The segment covering 1125-1138 has biased composition (low complexity); the sequence is VTSTITITPVTTSS. A compositionally biased stretch (polar residues) spans 1139-1156; that stretch reads ARGTQSVSGQDGSSQRPT. Positions 1168-1179 are enriched in low complexity; the sequence is AGKPVVAAPGAG.

This sequence belongs to the FILIP1 family. In terms of assembly, interacts with FLNA. Interacts with RHOD (in GTP-bound form). As to expression, moderately expressed in adult heart and brain. Weakly expressed in lung, skeletal muscle, ovary, testis, kidney, and fetal brain, and hardly detectable in liver, pancreas, spleen, and fetal liver. Within brain, moderate expression is found in amygdala and caudate nucleus. Expressed in skin fibroblasts.

The protein localises to the cytoplasm. The protein resides in the cytoskeleton. By acting through a filamin-A/F-actin axis, it controls the start of neocortical cell migration from the ventricular zone. May be able to induce the degradation of filamin-A. This chain is Filamin-A-interacting protein 1 (FILIP1), found in Homo sapiens (Human).